Consider the following 607-residue polypeptide: Kelch repeat and BTB domain-containing protein 3 (607 aa).

In terms of domain architecture, BTB spans 48-115 (YDFKIIMKEE…AYTGKTRITD (68 aa)). Residues 150-250 (CLHLLSLSDS…QLSEDTLQDY (101 aa)) enclose the BACK domain. 5 Kelch repeats span residues 291 to 337 (KYIF…SSYG), 339 to 390 (KIFL…TPRT), 400 to 450 (RLFV…ACQN), 452 to 502 (IYVL…KAVP), and 548 to 595 (KIYI…VIQF).

This Mus musculus (Mouse) protein is Kelch repeat and BTB domain-containing protein 3.